Consider the following 230-residue polypeptide: Orotidine 5'-phosphate decarboxylase (230 aa).

Substrate is bound by residues D11, K34, 61 to 70 (DLKLHDIPNT), T117, R179, Q188, G208, and R209. Residue K63 is the Proton donor of the active site.

The protein belongs to the OMP decarboxylase family. Type 1 subfamily. As to quaternary structure, homodimer.

The catalysed reaction is orotidine 5'-phosphate + H(+) = UMP + CO2. It functions in the pathway pyrimidine metabolism; UMP biosynthesis via de novo pathway; UMP from orotate: step 2/2. Its function is as follows. Catalyzes the decarboxylation of orotidine 5'-monophosphate (OMP) to uridine 5'-monophosphate (UMP). This is Orotidine 5'-phosphate decarboxylase from Streptococcus uberis (strain ATCC BAA-854 / 0140J).